We begin with the raw amino-acid sequence, 1477 residues long: Ring canal kelch protein (1477 aa).

Disordered regions lie at residues 19-62 (LSNG…PGLG), 76-96 (LLQQ…EGSG), and 108-137 (SQNS…YSNE). Low complexity predominate over residues 20-46 (SNGNSNNNNQQQQQQQQGQNPQQPAQN). Phosphoserine occurs at positions 108 and 111. The region spanning 157 to 223 (CDVILVADDV…VYTATVEVNE (67 aa)) is the BTB domain. Kelch repeat units lie at residues 404–449 (ILLV…VLGD), 450–496 (KVYA…VLNG), 498–543 (IYAV…VVHG), 545–592 (LYAV…VLNN), 594–639 (LYAV…AHDG), and 641–687 (LYVV…MIDK). Residue selenocysteine 690 is a non-standard amino acid, selenocysteine. 5 disordered regions span residues 744-841 (PAAP…PQRI), 1119-1200 (HSAA…GNGT), 1291-1326 (RDAN…QYED), 1359-1416 (PLLQ…FKPK), and 1446-1477 (PVSL…EHND). 2 stretches are compositionally biased toward low complexity: residues 763–813 (APIG…ANNN) and 820–839 (AAPA…QQPQ). Polar residues predominate over residues 1125–1137 (IPSSSNINANRTT). A compositionally biased stretch (low complexity) spans 1166-1192 (KTTSTGSGKSVTLAKKTSTAAARSSSS). Composition is skewed to low complexity over residues 1374-1391 (QQRR…QSQQ) and 1456-1477 (TTSS…EHND).

In terms of tissue distribution, both proteins are expressed in ovaries, male testis, ovariectomized females, cuticle, salivary gland and imaginal disks. Kelch short protein is the predominant form and is also expressed in fat bodies. On entry into metamorphosis levels of full-length protein increase in testis and imaginal disks.

The protein resides in the cytoplasm. It localises to the cytoskeleton. Its function is as follows. Component of ring canals that regulates the flow of cytoplasm between cells. May be involved in the regulation of cytoplasm flow from nurse cells to the oocyte during oogenesis. Binds actin. This Drosophila melanogaster (Fruit fly) protein is Ring canal kelch protein (kel).